The following is a 293-amino-acid chain: Ribosomal protein L11 methyltransferase (293 aa).

Residues Thr-145, Gly-166, Asp-188, and Asn-230 each coordinate S-adenosyl-L-methionine.

Belongs to the methyltransferase superfamily. PrmA family.

It localises to the cytoplasm. The enzyme catalyses L-lysyl-[protein] + 3 S-adenosyl-L-methionine = N(6),N(6),N(6)-trimethyl-L-lysyl-[protein] + 3 S-adenosyl-L-homocysteine + 3 H(+). Its function is as follows. Methylates ribosomal protein L11. The polypeptide is Ribosomal protein L11 methyltransferase (Shewanella baltica (strain OS155 / ATCC BAA-1091)).